A 168-amino-acid chain; its full sequence is Small ribosomal subunit protein uS5c (168 aa).

The S5 DRBM domain occupies 17–80; sequence WSERVIQITR…SDCKKQIIEF (64 aa).

Belongs to the universal ribosomal protein uS5 family. Part of the 30S ribosomal subunit. Contacts protein S4.

It localises to the plastid. It is found in the chloroplast. Its function is as follows. With S4 and S12 plays an important role in translational accuracy. The sequence is that of Small ribosomal subunit protein uS5c (rps5) from Cyanidium caldarium (Red alga).